Consider the following 410-residue polypeptide: Putative competence-damage inducible protein (410 aa).

It belongs to the CinA family.

This Clostridium kluyveri (strain NBRC 12016) protein is Putative competence-damage inducible protein.